A 92-amino-acid polypeptide reads, in one-letter code: Probable Fe(2+)-trafficking protein (92 aa).

Belongs to the Fe(2+)-trafficking protein family.

Could be a mediator in iron transactions between iron acquisition and iron-requiring processes, such as synthesis and/or repair of Fe-S clusters in biosynthetic enzymes. This is Probable Fe(2+)-trafficking protein from Shewanella sp. (strain ANA-3).